Here is a 467-residue protein sequence, read N- to C-terminus: Glutamate--tRNA ligase (467 aa).

The 'HIGH' region motif lies at 9 to 19; the sequence is PSPTGYLHIGG. Residues 237–241 carry the 'KMSKS' region motif; that stretch reads KLSKR. K240 contributes to the ATP binding site.

Belongs to the class-I aminoacyl-tRNA synthetase family. Glutamate--tRNA ligase type 1 subfamily. In terms of assembly, monomer.

Its subcellular location is the cytoplasm. The enzyme catalyses tRNA(Glu) + L-glutamate + ATP = L-glutamyl-tRNA(Glu) + AMP + diphosphate. Its function is as follows. Catalyzes the attachment of glutamate to tRNA(Glu) in a two-step reaction: glutamate is first activated by ATP to form Glu-AMP and then transferred to the acceptor end of tRNA(Glu). The sequence is that of Glutamate--tRNA ligase from Xanthomonas campestris pv. campestris (strain B100).